A 192-amino-acid polypeptide reads, in one-letter code: Inosine triphosphate pyrophosphatase (192 aa).

Residue 10–15 (TGNANK) coordinates ITP. Glu46 is a Mg(2+) binding site. Residues Lys58, 74-75 (DT), Lys91, 149-152 (FGWD), Lys172, and 177-178 (HR) each bind ITP.

This sequence belongs to the HAM1 NTPase family. In terms of assembly, homodimer. Mg(2+) is required as a cofactor. The cofactor is Mn(2+).

Its subcellular location is the cytoplasm. The protein localises to the nucleus. It carries out the reaction ITP + H2O = IMP + diphosphate + H(+). The enzyme catalyses dITP + H2O = dIMP + diphosphate + H(+). It catalyses the reaction XTP + H2O = XMP + diphosphate + H(+). Pyrophosphatase that hydrolyzes non-canonical purine nucleotides such as inosine triphosphate (ITP), deoxyinosine triphosphate (dITP) or xanthosine 5'-triphosphate (XTP) to their respective monophosphate derivatives. The enzyme does not distinguish between the deoxy- and ribose forms. Probably excludes non-canonical purines from RNA and DNA precursor pools, thus preventing their incorporation into RNA and DNA and avoiding chromosomal lesions. This Puccinia graminis f. sp. tritici (strain CRL 75-36-700-3 / race SCCL) (Black stem rust fungus) protein is Inosine triphosphate pyrophosphatase.